The following is a 529-amino-acid chain: Delayed-rectifier potassium channel regulatory subunit KCNS1 (529 aa).

Residues 1–217 are Cytoplasmic-facing; sequence MLMLLVRGTH…LTMENPGYSL (217 aa). A helical membrane pass occupies residues 218–239; sequence PSKLFSCVSISVVLASIAAMCI. The Extracellular portion of the chain corresponds to 240-270; that stretch reads HSLPEYQAREAAAAVAAVAAGRSPEGVRDDP. Residues 271 to 293 traverse the membrane as a helical segment; that stretch reads VLRRLEYFCIAWFSFEVSSRLLL. The Cytoplasmic segment spans residues 294–304; that stretch reads APSTRNFFCHP. A helical transmembrane segment spans residues 305–322; it reads LNLIDIVSVLPFYLTLLA. The Extracellular portion of the chain corresponds to 323 to 340; it reads GVALGDQGGTGGKELGHL. The helical; Voltage-sensor transmembrane segment at 341–361 threads the bilayer; sequence GKVVQVFRLMRIFRVLKLARH. The Cytoplasmic segment spans residues 362 to 376; that stretch reads STGLRSLGATLKHSY. Residues 377 to 398 traverse the membrane as a helical segment; the sequence is REVGILLLYLAVGVSVFSGVAY. The Extracellular segment spans residues 399–411; it reads TAEKEEDVGFNTI. An intramembrane region (helical) is located at residues 412 to 423; the sequence is PACWWWGTVSMT. Residues 424–429 carry the Selectivity filter motif; it reads TVGYGD. An intramembrane segment occupies 424–431; it reads TVGYGDVV. Topologically, residues 432–438 are extracellular; sequence PVTVAGK. The chain crosses the membrane as a helical span at residues 439–467; it reads LAASGCILGGILVVALPITIIFNKFSHFY. Residues 468–529 are Cytoplasmic-facing; sequence RRQKALEAAV…PSEPPHPQMY (62 aa). The disordered stretch occupies residues 496 to 529; the sequence is SEASLETSRETSQEGRSADLETQAPSEPPHPQMY. A compositionally biased stretch (basic and acidic residues) spans 502–514; it reads TSRETSQEGRSAD.

The protein belongs to the potassium channel family. S (TC 1.A.1.2) subfamily. Kv9.1/KCNS1 sub-subfamily. As to quaternary structure, heterotetramer with KCNB1. Heterotetramer with KCNB2. Does not form homomultimers.

It localises to the cell membrane. Functionally, potassium channel regulatory subunit that modulate the delayed rectifier voltage-gated potassium channel activity of KCNB1 and KCNB2 by altering their kinetics, expression levels, and shifting the half-inactivation potential to more polarized values. While it does not form functional channels on its own, it can form functional heterotetrameric channels with KCNB1 and KCNB2. Each regulatory subunit has unique regulatory properties that can lead to extensive inhibition, significant changes in kinetics, and/or substantial shifts in the voltage dependencies of the inactivation process. In Papio anubis (Olive baboon), this protein is Delayed-rectifier potassium channel regulatory subunit KCNS1.